The sequence spans 183 residues: Ribosome-recycling factor (183 aa).

It belongs to the RRF family.

It is found in the cytoplasm. Its function is as follows. Responsible for the release of ribosomes from messenger RNA at the termination of protein biosynthesis. May increase the efficiency of translation by recycling ribosomes from one round of translation to another. In Mycoplasma genitalium (strain ATCC 33530 / DSM 19775 / NCTC 10195 / G37) (Mycoplasmoides genitalium), this protein is Ribosome-recycling factor.